The following is a 122-amino-acid chain: Small ribosomal subunit protein uS13 (122 aa).

Positions 98-122 are disordered; it reads VRGQRTHTNARTRKGPAKAIAGKKK.

Belongs to the universal ribosomal protein uS13 family. As to quaternary structure, part of the 30S ribosomal subunit. Forms a loose heterodimer with protein S19. Forms two bridges to the 50S subunit in the 70S ribosome.

Its function is as follows. Located at the top of the head of the 30S subunit, it contacts several helices of the 16S rRNA. In the 70S ribosome it contacts the 23S rRNA (bridge B1a) and protein L5 of the 50S subunit (bridge B1b), connecting the 2 subunits; these bridges are implicated in subunit movement. Contacts the tRNAs in the A and P-sites. The chain is Small ribosomal subunit protein uS13 from Ruegeria sp. (strain TM1040) (Silicibacter sp.).